The primary structure comprises 85 residues: MSLLDYFKSKKKPSTAVMAKERLQIIVAHQRGQRDTPDYFPQMKQEIIAVIRKYVQISDDQVSVQLDQNDANLSVLELNVTLPDR.

It belongs to the MinE family.

In terms of biological role, prevents the cell division inhibition by proteins MinC and MinD at internal division sites while permitting inhibition at polar sites. This ensures cell division at the proper site by restricting the formation of a division septum at the midpoint of the long axis of the cell. The protein is Cell division topological specificity factor of Shewanella baltica (strain OS223).